Consider the following 3004-residue polypeptide: Guanylate cyclase beta (3004 aa).

Topologically, residues Met1 to Leu66 are cytoplasmic. A helical membrane pass occupies residues Ile67–Ile87. The Extracellular portion of the chain corresponds to Ser88 to Lys94. Residues Tyr95–Glu115 form a helical membrane-spanning segment. Residues Ser116 to Val300 are Cytoplasmic-facing. The chain crosses the membrane as a helical span at residues Tyr301–Phe321. Residues Tyr322–Thr334 lie on the Extracellular side of the membrane. N-linked (GlcNAc...) asparagine glycosylation occurs at Asn332. A helical transmembrane segment spans residues Phe335–Tyr355. Over Ser356 to Arg991 the chain is Cytoplasmic. The helical transmembrane segment at Ala992–Phe1012 threads the bilayer. Over Asp1013 to Ser1022 the chain is Extracellular. A helical transmembrane segment spans residues Ser1023 to Ala1043. Residues Ser1044–Asn1072 are Cytoplasmic-facing. A helical transmembrane segment spans residues Thr1073 to Leu1093. Residues Arg1094–Lys1105 are Extracellular-facing. Residues Phe1106–Ser1126 form a helical membrane-spanning segment. Residues Lys1127–His1130 lie on the Cytoplasmic side of the membrane. Residues Ile1131–Tyr1151 traverse the membrane as a helical segment. Over Thr1152–Asp1171 the chain is Extracellular. Residues Ser1172–Met1192 form a helical membrane-spanning segment. Over Lys1193–Arg1297 the chain is Cytoplasmic. A helical transmembrane segment spans residues Ile1298–Ser1318. The Extracellular segment spans residues Lys1319–Ser1327. The chain crosses the membrane as a helical span at residues Leu1328 to Ile1348. Residues Arg1349–Asn1353 lie on the Cytoplasmic side of the membrane. A helical transmembrane segment spans residues Tyr1354–Ser1374. Topologically, residues Glu1375 to Tyr1394 are extracellular. The chain crosses the membrane as a helical span at residues Ile1395–Ile1415. The Cytoplasmic portion of the chain corresponds to Ala1416–Gln1457. A helical transmembrane segment spans residues Ile1458–Tyr1478. At Glu1479–Gln1500 the chain is on the extracellular side. The helical transmembrane segment at Ile1501–Pro1521 threads the bilayer. The Cytoplasmic segment spans residues Lys1522 to Lys2563. The region spanning Ser1541–Lys1696 is the Guanylate cyclase 1 domain. The span at Thr2463 to Thr2476 shows a compositional bias: polar residues. Residues Thr2463 to Lys2491 are disordered. The span at Asp2477–Asp2488 shows a compositional bias: basic and acidic residues. Residues Leu2564 to Ser2584 traverse the membrane as a helical segment. The Extracellular segment spans residues Tyr2585–Asp2594. A helical transmembrane segment spans residues Phe2595–Leu2615. The Cytoplasmic portion of the chain corresponds to Leu2616–Thr2634. The helical transmembrane segment at Thr2635–Ile2655 threads the bilayer. Over His2656–Arg2667 the chain is Extracellular. Residues Ser2668–Lys2688 form a helical membrane-spanning segment. At Asn2689–Lys2695 the chain is on the cytoplasmic side. Residues Phe2696–Ile2716 form a helical membrane-spanning segment. Residues His2717–Arg2722 lie on the Extracellular side of the membrane. The chain crosses the membrane as a helical span at residues Ile2723 to Tyr2743. The Cytoplasmic portion of the chain corresponds to Leu2744 to Gly3004. The Guanylate cyclase 2 domain occupies Ala2793–Glu2927. Residues Asp2798, Ile2799, and Asp2842 each coordinate Mg(2+).

In the N-terminal section; belongs to the cation transport ATPase (P-type) (TC 3.A.3) family. Type IV subfamily. This sequence in the C-terminal section; belongs to the adenylyl cyclase class-4/guanylyl cyclase family. The cofactor is Mg(2+). Mn(2+) is required as a cofactor.

It localises to the membrane. It catalyses the reaction GTP = 3',5'-cyclic GMP + diphosphate. Functionally, catalyzes the synthesis of the second messenger cGMP from GTP. Probably by regulating cGMP production, required for ookinete gliding motility, which is necessary for the ookinete to traverse the midgut epithelium of the mosquito. This Plasmodium berghei (strain Anka) protein is Guanylate cyclase beta.